The primary structure comprises 901 residues: HTH-type transcriptional regulator MalT (901 aa).

39–46 is an ATP binding site; sequence SPAGYGKT. The HTH luxR-type domain maps to 829–894; that stretch reads ELIHTSPLTQ…AAVQHAQKLL (66 aa). Residues 853–872 constitute a DNA-binding region (H-T-H motif); it reads NEQIAGELEVAATTIKTHIR.

The protein belongs to the MalT family. Monomer in solution. Oligomerizes to an active state in the presence of the positive effectors ATP and maltotriose.

Its activity is regulated as follows. Activated by ATP and maltotriose, which are both required for DNA binding. Positively regulates the transcription of the maltose regulon whose gene products are responsible for uptake and catabolism of malto-oligosaccharides. Specifically binds to the promoter region of its target genes, recognizing a short DNA motif called the MalT box. This Shigella sonnei (strain Ss046) protein is HTH-type transcriptional regulator MalT.